Here is a 196-residue protein sequence, read N- to C-terminus: Large ribosomal subunit protein uL6 (196 aa).

Belongs to the universal ribosomal protein uL6 family. In terms of assembly, part of the 50S ribosomal subunit.

In terms of biological role, this protein binds to the 23S rRNA, and is important in its secondary structure. It is located near the subunit interface in the base of the L7/L12 stalk, and near the tRNA binding site of the peptidyltransferase center. The chain is Large ribosomal subunit protein uL6 from Archaeoglobus fulgidus (strain ATCC 49558 / DSM 4304 / JCM 9628 / NBRC 100126 / VC-16).